Reading from the N-terminus, the 214-residue chain is Adenylate kinase (214 aa).

10-15 (GVGKGT) is a binding site for ATP. The tract at residues 30–59 (STGDILRAAVKELTPMGAKAKGYMDSGALV) is NMP. AMP contacts are provided by residues threonine 31, arginine 36, 57-59 (ALV), 85-88 (GFPR), and glutamine 92. The interval 126–163 (GRRACANCGAGYHVDFAPSKVAGVCDACSGQLVQREDD) is LID. ATP is bound at residue arginine 127. Zn(2+)-binding residues include cysteine 130, cysteine 133, cysteine 150, and cysteine 153. Arginine 160 and arginine 171 together coordinate AMP. Glycine 199 serves as a coordination point for ATP.

It belongs to the adenylate kinase family. In terms of assembly, monomer.

The protein resides in the cytoplasm. The enzyme catalyses AMP + ATP = 2 ADP. It functions in the pathway purine metabolism; AMP biosynthesis via salvage pathway; AMP from ADP: step 1/1. In terms of biological role, catalyzes the reversible transfer of the terminal phosphate group between ATP and AMP. Plays an important role in cellular energy homeostasis and in adenine nucleotide metabolism. This chain is Adenylate kinase, found in Citrifermentans bemidjiense (strain ATCC BAA-1014 / DSM 16622 / JCM 12645 / Bem) (Geobacter bemidjiensis).